The sequence spans 290 residues: Probable branched-chain-amino-acid aminotransferase (290 aa).

Residue Lys155 is modified to N6-(pyridoxal phosphate)lysine.

This sequence belongs to the class-IV pyridoxal-phosphate-dependent aminotransferase family. It depends on pyridoxal 5'-phosphate as a cofactor.

The catalysed reaction is L-leucine + 2-oxoglutarate = 4-methyl-2-oxopentanoate + L-glutamate. It carries out the reaction L-isoleucine + 2-oxoglutarate = (S)-3-methyl-2-oxopentanoate + L-glutamate. The enzyme catalyses L-valine + 2-oxoglutarate = 3-methyl-2-oxobutanoate + L-glutamate. It functions in the pathway amino-acid biosynthesis; L-isoleucine biosynthesis; L-isoleucine from 2-oxobutanoate: step 4/4. It participates in amino-acid biosynthesis; L-leucine biosynthesis; L-leucine from 3-methyl-2-oxobutanoate: step 4/4. The protein operates within amino-acid biosynthesis; L-valine biosynthesis; L-valine from pyruvate: step 4/4. Functionally, acts on leucine, isoleucine and valine. This chain is Probable branched-chain-amino-acid aminotransferase (ilvE), found in Rickettsia conorii (strain ATCC VR-613 / Malish 7).